Consider the following 624-residue polypeptide: MPGAMRQSTSNLELLTIYEVSKILGSSLDLQQTLREVLRALAYQLQMHRGRVYLVGEDNVLRLVAANGLSNEAAAQIEFRDGEGITGRILKTGMPAVVPNLAEEPLFLNRTGGREDLDEQVASLVGVPIKAAGVVVGVLTIDRISDEGPQGHFGSDVRFLTMVANLIGQTVRLPHVAEEPLRDAETFRMQKELRPIAAPINDVVCTSPNMLEVMAQVHRVAPFKSTVLIRGESGTGKELIARAIHNMSPRKDAPFIRVNCAALPESLLESELFGHEKGAFTGAQKDHKGRFELASGGTLFLDEIGDISPNFQAKLLRVLQEQEFERVGGSKTIKTDVRLICATNLNLEEAIGHGKFRADLYFRINVVTIHLPPLRERRQDIGPLARHFVAKFAKDNGMTLVMEDEALEVLNRCTWPGNVRELENCIERAATQSRDGIIRTESLSCSLNLCNSSVLFQYRTLGASVGGLAPSMGPGSVNRVPPGRPGVPAPANAPKAPAMPAPVPEPAGAGSAWPACASGCSAGPSPVCGAAQPAVPVPLIPLPLPEPSAPAAAAPAPTSVTNAAPPPAAEVPLDEPESGSLRDRLLWAMERTGWVQAKAARLLGMTTRQVSYALRKYNIEIKRF.

The region spanning 29 to 171 (DLQQTLREVL…MVANLIGQTV (143 aa)) is the GAF domain. The region spanning 203 to 431 (VVCTSPNMLE…LENCIERAAT (229 aa)) is the Sigma-54 factor interaction domain. Residues 231–238 (GESGTGKE) and 294–303 (ASGGTLFLDE) each bind ATP. An inter-domain linker region spans residues 432 to 581 (QSRDGIIRTE…PLDEPESGSL (150 aa)). Residues C445 and C450 each contribute to the a divalent metal cation site. 2 disordered regions span residues 477–508 (VNRV…EPAG) and 549–578 (APAA…EPES). Residues 549 to 563 (APAAAAPAPTSVTNA) show a composition bias toward low complexity. Residues 582 to 624 (RDRLLWAMERTGWVQAKAARLLGMTTRQVSYALRKYNIEIKRF) are C-terminal DNA-binding domain. The H-T-H motif DNA-binding region spans 596 to 615 (QAKAARLLGMTTRQVSYALR).

Interacts with sigma-54.

Functionally, required for activation of most nif operons, which are directly involved in nitrogen fixation. The protein is Nif-specific regulatory protein (nifA) of Azospirillum lipoferum.